We begin with the raw amino-acid sequence, 422 residues long: Serine hydroxymethyltransferase (422 aa).

120–122 (GHI) contacts (6S)-5,6,7,8-tetrahydrofolate. The residue at position 226 (lysine 226) is an N6-(pyridoxal phosphate)lysine. (6S)-5,6,7,8-tetrahydrofolate is bound at residue glutamate 241.

This sequence belongs to the SHMT family. In terms of assembly, homodimer. Pyridoxal 5'-phosphate is required as a cofactor.

It is found in the cytoplasm. It catalyses the reaction 5,10-methylenetetrahydromethanopterin + glycine + H2O = 5,6,7,8-tetrahydromethanopterin + L-serine. It functions in the pathway amino-acid biosynthesis; glycine biosynthesis; glycine from L-serine: step 1/1. Its function is as follows. Catalyzes the reversible interconversion of serine and glycine with tetrahydromethanopterin (H4MPT) serving as the one-carbon carrier. Also exhibits a pteridine-independent aldolase activity toward beta-hydroxyamino acids, producing glycine and aldehydes, via a retro-aldol mechanism. The chain is Serine hydroxymethyltransferase from Methanosphaera stadtmanae (strain ATCC 43021 / DSM 3091 / JCM 11832 / MCB-3).